A 369-amino-acid polypeptide reads, in one-letter code: Protein V (369 aa).

Disordered stretches follow at residues 1–23 (MDQDALISKEDSEVEREASGGRE) and 54–320 (INTL…GHRR). Composition is skewed to basic and acidic residues over residues 7-20 (ISKEDSEVEREASG), 99-110 (AEAHARNVDKQN), 150-168 (GAEDENREMAANPDKRGED), and 175-193 (EEIRRSAPLPDEREGRADN). Phosphoserine; by host occurs at positions 249, 257, and 260. Zn(2+) is bound by residues His-318, Cys-337, Cys-341, Cys-353, Cys-355, Cys-358, Cys-362, and Cys-365.

Belongs to the paramyxoviruses V protein family. Interacts with host IFIH1/MDA5 and DHX58/LGP2. Interacts with host IRF3. Interacts with host RIGI regulatory protein (via CARDs domain) and host TRIM25 (via SPRY domain); these interactions prevent TRIM25-mediated ubiquitination of RIG-I and disrupts downstream RIG-I signaling.

It localises to the host cytoplasm. Functionally, plays an essential role in the inhibition of host immune response. Prevents the establishment of cellular antiviral state by blocking interferon-alpha/beta (IFN-alpha/beta) production and signaling pathway. Interacts with host IFIH1/MDA5 and DHX58/LGP2 to inhibit the transduction pathway involved in the activation of IFN-beta promoter, thus protecting the virus against cell antiviral state. Also interacts with and inhibits host IRF3. Blocks the type I interferon signaling pathway by disrupting the RIG-I signaling pathway. This is Protein V (P/V/C) from Cavia cutleri (Guinea pig).